The chain runs to 341 residues: S-adenosylmethionine:tRNA ribosyltransferase-isomerase (341 aa).

This sequence belongs to the QueA family. In terms of assembly, monomer.

Its subcellular location is the cytoplasm. It catalyses the reaction 7-aminomethyl-7-carbaguanosine(34) in tRNA + S-adenosyl-L-methionine = epoxyqueuosine(34) in tRNA + adenine + L-methionine + 2 H(+). It participates in tRNA modification; tRNA-queuosine biosynthesis. Functionally, transfers and isomerizes the ribose moiety from AdoMet to the 7-aminomethyl group of 7-deazaguanine (preQ1-tRNA) to give epoxyqueuosine (oQ-tRNA). In Trichlorobacter lovleyi (strain ATCC BAA-1151 / DSM 17278 / SZ) (Geobacter lovleyi), this protein is S-adenosylmethionine:tRNA ribosyltransferase-isomerase.